Consider the following 310-residue polypeptide: Aspartate carbamoyltransferase catalytic subunit (310 aa).

The carbamoyl phosphate site is built by R57 and T58. K86 provides a ligand contact to L-aspartate. The carbamoyl phosphate site is built by R107, H135, and Q138. R168 and R229 together coordinate L-aspartate. Carbamoyl phosphate is bound by residues L268 and P269.

The protein belongs to the aspartate/ornithine carbamoyltransferase superfamily. ATCase family. In terms of assembly, heterooligomer of catalytic and regulatory chains.

The enzyme catalyses carbamoyl phosphate + L-aspartate = N-carbamoyl-L-aspartate + phosphate + H(+). The protein operates within pyrimidine metabolism; UMP biosynthesis via de novo pathway; (S)-dihydroorotate from bicarbonate: step 2/3. Its function is as follows. Catalyzes the condensation of carbamoyl phosphate and aspartate to form carbamoyl aspartate and inorganic phosphate, the committed step in the de novo pyrimidine nucleotide biosynthesis pathway. The polypeptide is Aspartate carbamoyltransferase catalytic subunit (Thermococcus kodakarensis (strain ATCC BAA-918 / JCM 12380 / KOD1) (Pyrococcus kodakaraensis (strain KOD1))).